Reading from the N-terminus, the 474-residue chain is Ribulose bisphosphate carboxylase large chain (474 aa).

2 residues coordinate substrate: Asn122 and Thr172. Lys174 acts as the Proton acceptor in catalysis. Lys176 is a binding site for substrate. Mg(2+) contacts are provided by Lys200, Asp202, and Glu203. Lys200 is modified (N6-carboxylysine). The active-site Proton acceptor is the His293. Substrate contacts are provided by Arg294, His326, and Ser378.

Belongs to the RuBisCO large chain family. Type I subfamily. As to quaternary structure, heterohexadecamer of 8 large chains and 8 small chains; disulfide-linked. The disulfide link is formed within the large subunit homodimers. Mg(2+) is required as a cofactor. The disulfide bond which can form in the large chain dimeric partners within the hexadecamer appears to be associated with oxidative stress and protein turnover.

It is found in the carboxysome. It catalyses the reaction 2 (2R)-3-phosphoglycerate + 2 H(+) = D-ribulose 1,5-bisphosphate + CO2 + H2O. The catalysed reaction is D-ribulose 1,5-bisphosphate + O2 = 2-phosphoglycolate + (2R)-3-phosphoglycerate + 2 H(+). RuBisCO catalyzes two reactions: the carboxylation of D-ribulose 1,5-bisphosphate, the primary event in carbon dioxide fixation, as well as the oxidative fragmentation of the pentose substrate in the photorespiration process. Both reactions occur simultaneously and in competition at the same active site. This is Ribulose bisphosphate carboxylase large chain from Synechococcus sp. (strain JA-3-3Ab) (Cyanobacteria bacterium Yellowstone A-Prime).